Consider the following 64-residue polypeptide: Large ribosomal subunit protein bL33 (64 aa).

Residues 19–40 (TSTDPKRSNGVSRYTTEKNRRN) form a disordered region.

The protein belongs to the bacterial ribosomal protein bL33 family.

The protein is Large ribosomal subunit protein bL33 of Prochlorococcus marinus (strain MIT 9215).